Reading from the N-terminus, the 523-residue chain is Synaptotagmin-10 (523 aa).

The Vesicular segment spans residues 1–55 (MSFHKEDGVNSLCQKALHIVTELCFAGQVEWEKCSGIFPRDRGSQGGSSTDISVS). A cysteine motif region spans residues 13-35 (CQKALHIVTELCFAGQVEWEKCS). Residues 56–76 (LLAVVVSFCGLALLVVSLFVF) form a helical membrane-spanning segment. At 77–523 (WKLCWPCWKS…CPSPKPPSTP (447 aa)) the chain is on the cytoplasmic side. Thr-136 bears the Phosphothreonine mark. C2 domains follow at residues 231–352 (ICGK…TVWK) and 363–496 (DLGE…THWH). Ca(2+) contacts are provided by Asp-262, Asp-268, Asp-320, Phe-321, Asp-322, Ser-325, Asp-328, Asp-394, Asp-400, Asp-454, and Asp-456.

It belongs to the synaptotagmin family. As to quaternary structure, homodimer; disulfide-linked via the cysteine motif. Can also form heterodimers with SYT3, SYT6, SYT7 and SYT9. Ca(2+) serves as cofactor. As to expression, expressed only in pancreas, lung and kidney.

It is found in the cytoplasmic vesicle. The protein localises to the secretory vesicle membrane. In terms of biological role, ca(2+) sensor specifically required for the Ca(2+)-dependent exocytosis of secretory vesicles containing IGF1 in neurons of the olfactory bulb. Exocytosis of IGF1 is required for sensory perception of smell. Not involved in Ca(2+)-dependent synaptic vesicle exocytosis. Acts through Ca(2+) and phospholipid binding to the C2 domain: Ca(2+) induces binding of the C2-domains to phospholipid membranes and to assembled SNARE-complexes; both actions contribute to triggering exocytosis. This chain is Synaptotagmin-10 (SYT10), found in Homo sapiens (Human).